Here is a 157-residue protein sequence, read N- to C-terminus: Crossover junction endodeoxyribonuclease RuvC (157 aa).

Active-site residues include D7, E66, and D139. The Mg(2+) site is built by D7, E66, and D139.

The protein belongs to the RuvC family. In terms of assembly, homodimer which binds Holliday junction (HJ) DNA. The HJ becomes 2-fold symmetrical on binding to RuvC with unstacked arms; it has a different conformation from HJ DNA in complex with RuvA. In the full resolvosome a probable DNA-RuvA(4)-RuvB(12)-RuvC(2) complex forms which resolves the HJ. It depends on Mg(2+) as a cofactor.

Its subcellular location is the cytoplasm. The catalysed reaction is Endonucleolytic cleavage at a junction such as a reciprocal single-stranded crossover between two homologous DNA duplexes (Holliday junction).. Its function is as follows. The RuvA-RuvB-RuvC complex processes Holliday junction (HJ) DNA during genetic recombination and DNA repair. Endonuclease that resolves HJ intermediates. Cleaves cruciform DNA by making single-stranded nicks across the HJ at symmetrical positions within the homologous arms, yielding a 5'-phosphate and a 3'-hydroxyl group; requires a central core of homology in the junction. The consensus cleavage sequence is 5'-(A/T)TT(C/G)-3'. Cleavage occurs on the 3'-side of the TT dinucleotide at the point of strand exchange. HJ branch migration catalyzed by RuvA-RuvB allows RuvC to scan DNA until it finds its consensus sequence, where it cleaves and resolves the cruciform DNA. The chain is Crossover junction endodeoxyribonuclease RuvC from Campylobacter curvus (strain 525.92).